The primary structure comprises 634 residues: MTNSNLRTENHFDYVKISIASPQRIMDWGQRTLPNGQVVGEVTKPETINYRTLKPEMDGLFCEKIFGPSKDWECHCGKYKRVRHRGIVCERCGVEVTESRVRRHRMGYIKLAAPVSHVWYLKGIPSYVAILLDIPLRDVEQIVYFNCYVVLDPGDHKELKYKQLLTEDEWLEIEDEIYAEDSTIENEPFVGIGAEALKQLLEDLDLHQIAEELREEITNSKGQKRAKLIKRIRVIDNFIATNAKPEWMVLDAIPVIPPDLRPMVQLDGGRFATSDLNDLYRRVINRNNRLARLQEILAPEIIVRNEKRMLQEAVDALIDNGRRGRTVVGANNRALKSLSDIIEGKQGRFRQNLLGKRVDYSGRSVIVVGPKLKMHQCGLPKEMAIELFQPFVIHRLIRQNIVNNIKAAKKLIQKADDEVMQVLQEVIEGHPILLNRAPTLHRLGIQAFEPKLVGGRAIQLHPLVCPAFNADFDGDQMAVHVPLALEAQTEARMLMLASNNILSPATGEPIVTPSQDMVLGSYYLTALQPNYQKPEFGDNKTTFASLEDVIFAFEDKRLSLHEWIWVRFNGEVEDEDEMLSPQKTKELEDGSRLEIWNLRRDRFGSDNNLISRFVLTTVGRVVMNYTIIDSVSKT.

Positions 74, 76, 89, and 92 each coordinate Zn(2+). Residues D471, D473, and D475 each coordinate Mg(2+).

It belongs to the RNA polymerase beta' chain family. RpoC1 subfamily. In terms of assembly, in cyanobacteria the RNAP catalytic core is composed of 2 alpha, 1 beta, 1 beta', 1 gamma and 1 omega subunit. When a sigma factor is associated with the core the holoenzyme is formed, which can initiate transcription. The cofactor is Mg(2+). Requires Zn(2+) as cofactor.

The enzyme catalyses RNA(n) + a ribonucleoside 5'-triphosphate = RNA(n+1) + diphosphate. In terms of biological role, DNA-dependent RNA polymerase catalyzes the transcription of DNA into RNA using the four ribonucleoside triphosphates as substrates. This is DNA-directed RNA polymerase subunit gamma from Prochlorococcus marinus (strain AS9601).